A 317-amino-acid chain; its full sequence is Tumor necrosis factor ligand superfamily member 11 (317 aa).

Over residues 1 to 16 the composition is skewed to basic and acidic residues; sequence MRRASRDYTKYLRGSE. Positions 1-43 are disordered; it reads MRRASRDYTKYLRGSEEMGGGPGAPHEGPLHAPPPPAPHQPPA. The Cytoplasmic portion of the chain corresponds to 1 to 47; the sequence is MRRASRDYTKYLRGSEEMGGGPGAPHEGPLHAPPPPAPHQPPAASRS. The segment covering 31–41 has biased composition (pro residues); sequence HAPPPPAPHQP. The chain crosses the membrane as a helical; Signal-anchor for type II membrane protein span at residues 48–68; the sequence is MFVALLGLGLGQVVCSVALFF. Residues 69–317 are Extracellular-facing; sequence YFRAQMDPNR…FGAFKVRDID (249 aa). In terms of domain architecture, THD spans 164–313; it reads PFAHLTINAT…DATYFGAFKV (150 aa). 2 N-linked (GlcNAc...) asparagine glycosylation sites follow: N171 and N198.

The protein belongs to the tumor necrosis factor family. Homotrimer. Interacts with TNFRSF11B. Interacts with TNFRSF11A. Interacts with FBN1 (via N-terminal domain) in a Ca(+2)-dependent manner. Interacts with TNFAIP6 (via both Link and CUB domains). In terms of processing, the soluble form of isoform 1 derives from the membrane form by proteolytic processing. The cleavage may be catalyzed by ADAM17. In terms of tissue distribution, highest in the peripheral lymph nodes, weak in spleen, peripheral blood Leukocytes, bone marrow, heart, placenta, skeletal muscle, stomach and thyroid.

It is found in the cell membrane. Its subcellular location is the cytoplasm. The protein localises to the secreted. Its function is as follows. Cytokine that binds to TNFRSF11B/OPG and to TNFRSF11A/RANK. Osteoclast differentiation and activation factor. Augments the ability of dendritic cells to stimulate naive T-cell proliferation. May be an important regulator of interactions between T-cells and dendritic cells and may play a role in the regulation of the T-cell-dependent immune response. May also play an important role in enhanced bone-resorption in humoral hypercalcemia of malignancy. Induces osteoclastogenesis by activating multiple signaling pathways in osteoclast precursor cells, chief among which is induction of long lasting oscillations in the intracellular concentration of Ca (2+) resulting in the activation of NFATC1, which translocates to the nucleus and induces osteoclast-specific gene transcription to allow differentiation of osteoclasts. During osteoclast differentiation, in a TMEM64 and ATP2A2-dependent manner induces activation of CREB1 and mitochondrial ROS generation necessary for proper osteoclast generation. In Homo sapiens (Human), this protein is Tumor necrosis factor ligand superfamily member 11 (TNFSF11).